The primary structure comprises 360 residues: Isopentenyl-diphosphate delta-isomerase (360 aa).

12–13 provides a ligand contact to substrate; that stretch reads RK. Residues Ser-70, 71–73, Ser-101, and Asn-130 each bind FMN; that span reads SMT. Residue 101 to 103 coordinates substrate; it reads SMR. Position 165 (Gln-165) interacts with substrate. A Mg(2+)-binding site is contributed by Glu-166. FMN-binding positions include Lys-197, 288–290, and 309–310; these read GIR and AG.

Belongs to the IPP isomerase type 2 family. In terms of assembly, homooctamer. Dimer of tetramers. Requires FMN as cofactor. NADPH serves as cofactor. It depends on Mg(2+) as a cofactor.

It is found in the cytoplasm. It catalyses the reaction isopentenyl diphosphate = dimethylallyl diphosphate. In terms of biological role, involved in the biosynthesis of isoprenoids. Catalyzes the 1,3-allylic rearrangement of the homoallylic substrate isopentenyl (IPP) to its allylic isomer, dimethylallyl diphosphate (DMAPP). This chain is Isopentenyl-diphosphate delta-isomerase, found in Chlorobium limicola (strain DSM 245 / NBRC 103803 / 6330).